Here is a 335-residue protein sequence, read N- to C-terminus: Mycobacterial beta-ketoacyl-[acyl-carrier-protein] synthase III (335 aa).

Catalysis depends on residues C122 and H258. The ACP-binding stretch occupies residues 259–263 (QANSR). The active site involves N289.

Belongs to the thiolase-like superfamily. FabH family. In terms of assembly, homodimer.

The protein resides in the cytoplasm. The catalysed reaction is malonyl-[ACP] + dodecanoyl-CoA + H(+) = 3-oxotetradecanoyl-[ACP] + CO2 + CoA. It functions in the pathway lipid metabolism; fatty acid biosynthesis. The protein operates within lipid metabolism; mycolic acid biosynthesis. In terms of biological role, catalyzes the condensation reaction of fatty acid synthesis by the addition to an acyl acceptor of two carbons from malonyl-ACP. Catalyzes the first condensation reaction which initiates fatty acid synthesis and may therefore play a role in governing the total rate of fatty acid production. Possesses both acetoacetyl-ACP synthase and acetyl transacylase activities. Its substrate specificity determines the biosynthesis of branched-chain and/or straight-chain of fatty acids. The polypeptide is Mycobacterial beta-ketoacyl-[acyl-carrier-protein] synthase III (Mycobacterium avium (strain 104)).